We begin with the raw amino-acid sequence, 243 residues long: UPF0246 protein MGAS9429_Spy1799 (243 aa).

It belongs to the UPF0246 family.

This Streptococcus pyogenes serotype M12 (strain MGAS9429) protein is UPF0246 protein MGAS9429_Spy1799.